Consider the following 457-residue polypeptide: Argininosuccinate lyase (457 aa).

The protein belongs to the lyase 1 family. Argininosuccinate lyase subfamily.

Its subcellular location is the cytoplasm. The catalysed reaction is 2-(N(omega)-L-arginino)succinate = fumarate + L-arginine. It functions in the pathway amino-acid biosynthesis; L-arginine biosynthesis; L-arginine from L-ornithine and carbamoyl phosphate: step 3/3. The polypeptide is Argininosuccinate lyase (Shewanella sediminis (strain HAW-EB3)).